We begin with the raw amino-acid sequence, 407 residues long: Peptidase T (407 aa).

Histidine 82 lines the Zn(2+) pocket. Residue aspartate 84 is part of the active site. A Zn(2+)-binding site is contributed by aspartate 143. Glutamate 177 serves as the catalytic Proton acceptor. Zn(2+) contacts are provided by glutamate 178, aspartate 200, and histidine 382.

It belongs to the peptidase M20B family. Zn(2+) is required as a cofactor.

The protein localises to the cytoplasm. The enzyme catalyses Release of the N-terminal residue from a tripeptide.. Cleaves the N-terminal amino acid of tripeptides. In Streptococcus pyogenes serotype M4 (strain MGAS10750), this protein is Peptidase T.